The primary structure comprises 519 residues: Cilia- and flagella-associated protein 157 (519 aa).

A compositionally biased stretch (basic residues) spans 1 to 11 (MPPKKKGKRGP). The tract at residues 1-25 (MPPKKKGKRGPSAKTKEKETVRVAS) is disordered. 2 coiled-coil regions span residues 28 to 185 (VTEQ…EKKV) and 241 to 356 (IELI…QRTL).

The protein belongs to the CFAP157 family.

It is found in the cytoplasm. Its subcellular location is the cytoskeleton. The protein resides in the cilium basal body. Specifically required during spermatogenesis for flagellum morphogenesis and sperm motility. The chain is Cilia- and flagella-associated protein 157 from Xenopus tropicalis (Western clawed frog).